Reading from the N-terminus, the 96-residue chain is Ribonuclease P protein component 1 (96 aa).

It belongs to the eukaryotic/archaeal RNase P protein component 1 family. In terms of assembly, consists of a catalytic RNA component and at least 4-5 protein subunits.

The protein localises to the cytoplasm. It carries out the reaction Endonucleolytic cleavage of RNA, removing 5'-extranucleotides from tRNA precursor.. Its function is as follows. Part of ribonuclease P, a protein complex that generates mature tRNA molecules by cleaving their 5'-ends. This is Ribonuclease P protein component 1 from Methanococcus aeolicus (strain ATCC BAA-1280 / DSM 17508 / OCM 812 / Nankai-3).